The chain runs to 603 residues: Adenine deaminase (603 aa).

Belongs to the metallo-dependent hydrolases superfamily. Adenine deaminase family. As to quaternary structure, homodimer. Requires Mn(2+) as cofactor.

The enzyme catalyses adenine + H2O + H(+) = hypoxanthine + NH4(+). The protein is Adenine deaminase of Klebsiella pneumoniae subsp. pneumoniae (strain ATCC 700721 / MGH 78578).